Reading from the N-terminus, the 224-residue chain is uncharacterized protein (224 aa).

Positions 9 to 68 (SKMVDVNEITKYLPGFNCGACGYKRCDLFAEALLNKDVKLEDCPFLLRERFKENYEKLKE) constitute a 4Fe-4S domain. Cysteine 26, cysteine 29, cysteine 34, and cysteine 51 together coordinate [4Fe-4S] cluster.

[4Fe-4S] cluster serves as cofactor.

This is an uncharacterized protein from Methanocaldococcus jannaschii (strain ATCC 43067 / DSM 2661 / JAL-1 / JCM 10045 / NBRC 100440) (Methanococcus jannaschii).